The chain runs to 254 residues: MSLARGHGDTAASTAAPLSEEGEVTSGLQALAVEDTGGPSASAGKAEDEGEGGREETEREGSGGEEAQGEVPSAGGEEPAEEDSEDWCVPCSDEEVELPADGQPWMPPPSEIQRLYELLAAHGTLELQAEILPRRPPTPEAQSEEERSDEEPEAKEEEEEKPHMPTEFDFDDEPVTPKDSLIDRRRTPGSSARSQKREARLDKVLSDMKRHKKLEEQILRTGRDLFSLDSEDPSPASPPLRSSGSSLFPRQRKY.

2 disordered regions span residues 1-111 (MSLA…PPSE) and 127-254 (LQAE…QRKY). Over residues 45-62 (KAEDEGEGGREETEREGS) the composition is skewed to basic and acidic residues. The span at 78–98 (EPAEEDSEDWCVPCSDEEVEL) shows a compositional bias: acidic residues. The segment at 116–160 (YELLAAHGTLELQAEILPRRPPTPEAQSEEERSDEEPEAKEEEEE) is sufficient for interaction with NCOA1. T138 is subject to Phosphothreonine. Acidic residues predominate over residues 142 to 159 (QSEEERSDEEPEAKEEEE). Residues S143 and S148 each carry the phosphoserine modification. The sufficient for interaction with ESR1 stretch occupies residues 161–254 (KPHMPTEFDF…SSLFPRQRKY (94 aa)). The segment covering 195-223 (QKREARLDKVLSDMKRHKKLEEQILRTGR) has biased composition (basic and acidic residues). Residue S237 is modified to Phosphoserine.

Component of the KMT2 family MLL2/MLL3 complex (also named ASCOM complex), at least composed of the HMTs KMT2D and/or KMT2C, the common subunits ASH2L, RBBP5, WDR5 and DPY30, and the complex type-specific subunits PAXIP1/PTIP, PAGR1, NCOA6 and KDM6A; PAXIP1 is required for the association with the MLL2/MLL3 complex. Forms a constitutive complex with PAXIP1/PTIP independently of the MLL2/MLL3 complex. Interacts with NCOA1, ESR1, NR3C1, AR. As to expression, ubiquitously expressed.

The protein localises to the nucleus. In terms of biological role, its association with the histone methyltransferase MLL2/MLL3 complex is suggesting a role in epigenetic transcriptional activation. However, in association with PAXIP1/PTIP is proposed to function at least in part independently of the MLL2/MLL3 complex. Proposed to be recruited by PAXIP1 to sites of DNA damage where the PAGR1:PAXIP1 complex is required for cell survival in response to DNA damage independently of the MLL2/MLL3 complex. However, its function in DNA damage has been questioned. During immunoglobulin class switching in activated B-cells is involved in transcription regulation of downstream switch regions at the immunoglobulin heavy-chain (Igh) locus independently of the MLL2/MLL3 complex. Involved in both estrogen receptor-regulated gene transcription and estrogen-stimulated G1/S cell-cycle transition. Acts as a transcriptional cofactor for nuclear hormone receptors. Inhibits the induction properties of several steroid receptors such as NR3C1, AR and PPARG; the mechanism of inhibition appears to be gene-dependent. In Homo sapiens (Human), this protein is PAXIP1-associated glutamate-rich protein 1 (PAGR1).